A 901-amino-acid chain; its full sequence is Nuclear factor of activated T-cells, cytoplasmic 4 (901 aa).

Disordered stretches follow at residues 15 to 179 (LVFG…LSSW) and 203 to 362 (NEAA…EDSV). The segment covering 61–81 (IPRPPPPRPGMHSPPPRPAPS) has biased composition (pro residues). Residues 96–109 (GGPGGNAGGAGGGR) are compositionally biased toward gly residues. The tract at residues 114–119 (PSIRIT) is calcineurin-binding. The segment covering 114 to 123 (PSIRITSISP) has biased composition (low complexity). Residues 151-165 (GFGGYREAGGQGGGA) show a composition bias toward gly residues. Residues 166-179 (FFSPSPGSSSLSSW) show a composition bias toward low complexity. Ser-168 and Ser-170 each carry phosphoserine; by MAPK7 and MAPK14. Phosphoserine; by MAPK8 and MAPK9 is present on residues Ser-213 and Ser-217. The stretch at 213–229 (SPLPSPRASPRPWTPED) is one SP 1 repeat. The interval 213–293 (SPLPSPRASP…LSRRGSLGEE (81 aa)) is 2 approximate SP repeats. Pro residues-rich tracts occupy residues 215-227 (LPSP…PWTP) and 254-263 (GPVPASPRPA). A Nuclear localization signal motif is present at residues 268–270 (KRR). Residues 272 to 288 (SSSGTPSSASPALSRRG) are compositionally biased toward low complexity. The stretch at 277 to 293 (PSSASPALSRRGSLGEE) is one SP 2; approximate repeat. The residue at position 289 (Ser-289) is a Phosphoserine. A Phosphoserine; by RPS6KA3 modification is found at Ser-334. Ser-344 carries the phosphoserine modification. One can recognise an RHD domain in the interval 401–582 (SALPPLDWPL…VPIECSQRSA (182 aa)). Residues 430 to 437 (RAHYETEG) mediate DNA binding. The IPT/TIG domain occupies 586-683 (PQVETYSPSA…KRSPTQSFKF (98 aa)). A Nuclear localization signal motif is present at residues 672-674 (RRK). Lys-689 is covalently cross-linked (Glycyl lysine isopeptide (Lys-Gly) (interchain with G-Cter in SUMO2)). 2 disordered regions span residues 695-721 (DSSL…PRPP) and 827-869 (PQSA…FRDS).

In terms of assembly, member of the multicomponent NFATC transcription complex that consists of at least two components, a pre-existing cytoplasmic component NFATC2 and an inducible nuclear component NFATC1. Other NFAT proteins, such as NFATC3, or members of the activating protein-1 (AP-1) family and MAF can also bind the complex. NFAT proteins can bind DNA as monomers or dimers. Component of a promoter-binding complex composed of STAT3, NFATC3 and NFATC4; complex formation is enhanced by calcineurin. Interacts with CREBBP; this interaction potentiates transcription activation. Interacts with MAPK8/JNK1 and MAPK9/JNK2. Interacts with GATA4 (via the second Zn finger). Interacts (via N-terminus) with IRAK1 (via C-terminus). Interacts with RPS6KA3. Interacts with HOMER1, HOMER2 and HOMER3; this interaction competes with calcineurin/PPP3CA-binding and hence prevents NFATC4 dephosphorylation and activation. Interacts with ESR1 and ESR2; this interaction decreases NFATC4 transcriptional activity. Interacts with MTOR and MAPK7/ERK5. Interacts with TRIM17; this interaction prevents NFATC3 nuclear localization. Interacts with TCF25 (via C-terminus); the interaction leads to suppression of NFATC4 transcription factor activity and is reduced following stimulation with angiotensin-2. In terms of processing, phosphorylated by NFATC-kinases; dephosphorylated by calcineurin/PPP3CA. Phosphorylated on Ser-168 and Ser-170 by MTOR, IRAK1, MAPK7/ERK5 and MAPK14/p38, on Ser-213 and Ser-217 by MAPK8 and MAPK9, and on Ser-289 and Ser-344 by RPS6KA3. Phosphorylated by GSK3B. Phosphorylation by GSK3B markedly increases NFATC4 ubiquitination. Phosphorylation by MAPK8/JNK1, MAPK9/JNK2 and RPS6KA3 may stimulate NFATC4 transcriptional activity. Phosphorylation at Ser-168 and Ser-170 is stimulated by UV irradiation. Ubiquitinated, leading to degradation by the proteasome. Ubiquitination may be stimulated by GSK3B-dependent phosphorylation. Polyubiquitin linkage mainly occurs through 'Lys-48'. Widely expressed. In the brain, expressed in neurons. Expressed in the hippocampus (at protein level). In the hippocampus, expressed in both the CA1-CA3 pyramidal cells and the dentate gyrus granular cells. Expressed in a subset of hippocampal cells representing adult-born neurons (at protein level). Expressed in the submandibular gland (at protein level). In the olfactory system, expressed at low levels in the glomerular and granular layers and in the mitral cell layer. In the cerebellum, expressed at moderate levels in granular neurons. Expressed at moderate levels in the choroid plexus and ependymal cells. Expressed in neurons of the cochlear nucleus (at protein level). Expressed at low levels in the heart (at protein level). Expressed in ventricular cardiomyocytes (at protein level). Expressed in the lung.

It localises to the cytoplasm. It is found in the nucleus. In terms of biological role, ca(2+)-regulated transcription factor that is involved in several processes, including the development and function of the immune, cardiovascular, musculoskeletal, and nervous systems. Involved in T-cell activation, stimulating the transcription of cytokine genes, including that of IL2 and IL4. Following JAK/STAT signaling activation and as part of a complex with NFATC3 and STAT3, binds to the alpha-beta E4 promoter region of CRYAB and activates transcription in cardiomyocytes. Along with NFATC3, involved in embryonic heart development. Involved in mitochondrial energy metabolism required for cardiac morphogenesis and function. Transactivates many genes involved in heart physiology. Along with GATA4, binds to and activates NPPB/BNP promoter. Activates NPPA/ANP/ANF and MYH7/beta-MHC transcription. Binds to and transactivates AGTR2 gene promoter. Involved in the regulation of adult hippocampal neurogenesis. Involved in BDNF-driven pro-survival signaling in hippocampal adult-born neurons. Involved in the formation of long-term spatial memory and long-term potentiation. In cochlear nucleus neurons, may play a role in deafferentation-induced apoptosis during a developmental critical period when auditory neurons depend on afferent input for survival. Binds to and activates the BACE1/Beta-secretase 1 promoter, hence may regulate the proteolytic processing of the amyloid precursor protein (APP). Plays a role in adipocyte differentiation. May be involved in myoblast differentiation into myotubes. Binds the consensus DNA sequence 5'-GGAAAAT-3'. In the presence of CREBBP, activates TNF transcription. Binds to PPARG gene promoter and regulates its activity. Binds to PPARG and REG3G gene promoters. In Mus musculus (Mouse), this protein is Nuclear factor of activated T-cells, cytoplasmic 4.